Reading from the N-terminus, the 188-residue chain is Peptidyl-tRNA hydrolase (188 aa).

Residue tyrosine 14 coordinates tRNA. Histidine 19 acts as the Proton acceptor in catalysis. Residues tyrosine 64, asparagine 66, and asparagine 112 each contribute to the tRNA site.

It belongs to the PTH family. In terms of assembly, monomer.

It localises to the cytoplasm. The enzyme catalyses an N-acyl-L-alpha-aminoacyl-tRNA + H2O = an N-acyl-L-amino acid + a tRNA + H(+). Its function is as follows. Hydrolyzes ribosome-free peptidyl-tRNAs (with 1 or more amino acids incorporated), which drop off the ribosome during protein synthesis, or as a result of ribosome stalling. Catalyzes the release of premature peptidyl moieties from peptidyl-tRNA molecules trapped in stalled 50S ribosomal subunits, and thus maintains levels of free tRNAs and 50S ribosomes. The sequence is that of Peptidyl-tRNA hydrolase from Bacillus licheniformis (strain ATCC 14580 / DSM 13 / JCM 2505 / CCUG 7422 / NBRC 12200 / NCIMB 9375 / NCTC 10341 / NRRL NRS-1264 / Gibson 46).